The sequence spans 302 residues: Coenzyme PQQ synthesis protein B (302 aa).

It belongs to the PqqB family.

It functions in the pathway cofactor biosynthesis; pyrroloquinoline quinone biosynthesis. Functionally, may be involved in the transport of PQQ or its precursor to the periplasm. In Azotobacter vinelandii (strain DJ / ATCC BAA-1303), this protein is Coenzyme PQQ synthesis protein B.